Here is a 424-residue protein sequence, read N- to C-terminus: MPLLWKRGFLLVICWIIVRSSPTPGSEGHSSVADCPSCALTTLSKDVPSSQPEMVEAVKKHILNMLHLRDRPNITQPVPKAALLNATKKLHVGKVGDDGYVEIEDDVGRRAEMNEVVEQTSEIITFAESGTPKKTLHFEISKEGSELSVVEHAEVWLFLKVSKANRSRTKVTIRLFQQQRQPKGNSEAAEDMEDMGLKGERSETLISEKAVDARKSTWHIFPISSSVQRLLDQGQSSLDVRIACDLCQETGASLVLLGKKKKKEDDGEGKEKDGGELTGEEEKEQSHRPFLMMLARHSEDRQHRRRERGLECDGKVNICCKKQFFVSFKDIGWSDWIIAPTGYHANYCEEECPSHIAGTSGSSLSFHSTVINHYRMRGHSPFANLKSCCVPTKLRPMSMLYYDDGQNIIKKDIQNMIVEECGCS.

A signal peptide spans 1–20 (MPLLWKRGFLLVICWIIVRS). Positions 21-308 (SPTPGSEGHS…EDRQHRRRER (288 aa)) are excised as a propeptide. Asn-165 carries N-linked (GlcNAc...) asparagine glycosylation. Disordered stretches follow at residues 178–200 (QQRQ…LKGE) and 260–288 (KKKK…QSHR). Residues 263–275 (KEDDGEGKEKDGG) show a composition bias toward basic and acidic residues. Cystine bridges form between Cys-312/Cys-320, Cys-319/Cys-389, Cys-348/Cys-421, and Cys-352/Cys-423.

Belongs to the TGF-beta family. As to quaternary structure, dimeric, linked by one or more disulfide bonds. Inhibin A is a dimer of alpha and beta-A. Inhibin B is a dimer of alpha and beta-B. Activin A is a homodimer of beta-A. Activin B is a homodimer of beta-B. Activin AB is a dimer of beta-A and beta-B. As to expression, ciliary ganglion neurons. Levels are higher in the choroid than the iris.

It localises to the secreted. Its function is as follows. Inhibins and activins inhibit and activate, respectively, the secretion of follitropin by the pituitary gland. Inhibins/activins are involved in regulating a number of diverse functions such as hypothalamic and pituitary hormone secretion, gonadal hormone secretion, germ cell development and maturation, erythroid differentiation, insulin secretion, nerve cell survival, embryonic axial development or bone growth, depending on their subunit composition. Inhibins appear to oppose the functions of activins. Induces somatostatin in the ciliary ganglion neurons and may play a role in regulating neurotransmitter phenotype. The protein is Inhibin beta A chain (INHBA) of Gallus gallus (Chicken).